A 767-amino-acid chain; its full sequence is 5-methyltetrahydropteroyltriglutamate--homocysteine methyltransferase (767 aa).

Lys-19 contributes to the 5-methyltetrahydropteroyltri-L-glutamate binding site. Ser-89 is modified (phosphoserine). Asn-126 is a 5-methyltetrahydropteroyltri-L-glutamate binding site. Ser-242 carries the phosphoserine modification. L-homocysteine-binding positions include 444–446 (IGS) and Glu-497. Residues 444–446 (IGS) and Glu-497 each bind L-methionine. 5-methyltetrahydropteroyltri-L-glutamate-binding positions include Asp-502, Tyr-525, and 528-529 (RY). A Phosphothreonine modification is found at Thr-566. Trp-574 is a 5-methyltetrahydropteroyltri-L-glutamate binding site. Asp-612 lines the L-homocysteine pocket. Residue Asp-612 participates in L-methionine binding. Ser-629 is modified (phosphoserine). Zn(2+) is bound by residues His-655, Cys-657, and Glu-677. His-705 functions as the Proton donor in the catalytic mechanism. Ser-706 is modified (phosphoserine). Cys-737 is a Zn(2+) binding site.

Belongs to the vitamin-B12 independent methionine synthase family. Zn(2+) serves as cofactor.

It catalyses the reaction 5-methyltetrahydropteroyltri-L-glutamate + L-homocysteine = tetrahydropteroyltri-L-glutamate + L-methionine. It functions in the pathway amino-acid biosynthesis; L-methionine biosynthesis via de novo pathway; L-methionine from L-homocysteine (MetE route): step 1/1. Catalyzes the transfer of a methyl group from 5-methyltetrahydrofolate to homocysteine resulting in methionine formation. This Saccharomyces cerevisiae (strain ATCC 204508 / S288c) (Baker's yeast) protein is 5-methyltetrahydropteroyltriglutamate--homocysteine methyltransferase (MET6).